A 272-amino-acid chain; its full sequence is Transformer-2 sex-determining protein (272 aa).

Disordered stretches follow at residues 21–102 (KHKC…DHPQ) and 182–272 (ITQR…QSRY). Low complexity predominate over residues 26 to 41 (HSSATSSPSSAASSES). Over residues 87–102 (TSRDRQRMRQARDHPQ) the composition is skewed to basic and acidic residues. Residues 105 to 183 (RCIGVFGLNT…RRIRVDYSIT (79 aa)) enclose the RRM domain. Residues 184–204 (QRAHTPTPGVYMGRPSRPLGR) are linker. Residues 205–218 (RSRERDYSTRDTSR) are compositionally biased toward basic and acidic residues. Residues 238 to 266 (RKYRSRHRYDRSRSRTRSYSRSRSPRKPV) show a composition bias toward basic residues.

The protein belongs to the splicing factor SR family. In terms of processing, extensively phosphorylated on serine residues in the RS domain.

In terms of biological role, required for female sex determination in somatic cells and for spermatogenesis in male germ cells. Positive regulator of female-specific splicing and/or polyadenylation of doublesex (dsx) pre-mRNA. Splicing requires an enhancer complex, dsxRE (dsx repeat element: which contains six copies of a 13-nucleotide repeat and a purine-rich enhancer (PRE)). DsxRE is formed through cooperative interactions between tra, tra2 and the sr proteins, and these interactions require both the repeat sequences and PRE. PRE is required for specific binding of tra2 to the dsxRE. Protein-RNA and protein-protein interactions are involved in tra-2 dependent activation and repression of alternative splicing. The chain is Transformer-2 sex-determining protein (tra2) from Drosophila virilis (Fruit fly).